The following is a 264-amino-acid chain: tRNA pseudouridine synthase A (264 aa).

D56 acts as the Nucleophile in catalysis. Y114 is a substrate binding site.

Belongs to the tRNA pseudouridine synthase TruA family. In terms of assembly, homodimer.

It catalyses the reaction uridine(38/39/40) in tRNA = pseudouridine(38/39/40) in tRNA. Its function is as follows. Formation of pseudouridine at positions 38, 39 and 40 in the anticodon stem and loop of transfer RNAs. The sequence is that of tRNA pseudouridine synthase A from Buchnera aphidicola subsp. Baizongia pistaciae (strain Bp).